We begin with the raw amino-acid sequence, 478 residues long: Glutamine synthetase (478 aa).

One can recognise a GS beta-grasp domain in the interval 16–100; the sequence is EKVEYVDVRF…INFFVHDPFT (85 aa). One can recognise a GS catalytic domain in the interval 108-478; that stretch reads PRNIARKAEN…PYEFALYYDV (371 aa). Positions 133 and 135 each coordinate Mg(2+). Residue E214 participates in ATP binding. The Mg(2+) site is built by E219 and E227. ATP is bound at residue 230 to 232; the sequence is YQF. L-glutamate contacts are provided by residues 271–272 and G272; that span reads NG. H276 is a binding site for Mg(2+). Residues 278–280 and S280 contribute to the ATP site; that span reads HQS. 3 residues coordinate L-glutamate: R329, E335, and R347. ATP-binding residues include R347, R352, and K361. Residue E366 participates in Mg(2+) binding. R368 contacts L-glutamate. O-AMP-tyrosine is present on Y406.

Belongs to the glutamine synthetase family. In terms of assembly, oligomer of 12 subunits arranged in the form of two hexagons. The cofactor is Mg(2+).

The protein resides in the cytoplasm. The catalysed reaction is L-glutamate + NH4(+) + ATP = L-glutamine + ADP + phosphate + H(+). When cellular nitrogen levels are high, the C-terminal adenylyl transferase (AT) of GlnE inhibits GlnA by covalent transfer of an adenylyl group from ATP to Tyr-406. Conversely, when nitrogen levels are low, the N-terminal adenylyl removase (AR) of GlnE activates GlnA by removing the adenylyl group by phosphorolysis. The fully adenylated enzyme complex is inactive. Its function is as follows. Involved in nitrogen metabolism via ammonium assimilation. Catalyzes the ATP-dependent biosynthesis of glutamine from glutamate and ammonia. Also plays a key role in controlling the ammonia levels within infected host cells and so contributes to the pathogens capacity to inhibit phagosome acidification and phagosome-lysosome fusion. Involved in cell wall biosynthesis via the production of the major component poly-L-glutamine (PLG). PLG synthesis in the cell wall occurs only in nitrogen limiting conditions and on the contrary high nitrogen conditions inhibit PLG synthesis. In Mycobacterium bovis (strain ATCC BAA-935 / AF2122/97), this protein is Glutamine synthetase.